Consider the following 590-residue polypeptide: MTVNGWLQIGIFIAAVLLGAKPLGVYMAAVFERRHTWLDPVLVPVEKLLYRLTAVKAEEEMHWTAYCASMLIFSAATMLLTYLIERVQQFLPLNPQHLGGVPAQLAWNTAISFTTNTNWQAYTPESTMSYLTQMVGLATHNFWSAAVGIALAIAFIRGIARKEMKTLGNFWVDMTRAILWVLLPICVVFALVLTSQGVIQNLKSYTVAHVVQPQSQTQTVNGKTVTTTDSTQTIAQGPVASQEAIKMLGTNGGGFFNANSSHPFENPTPLSNMLEMISIFLIPAGLTVTLGQMTGSPRHGWAVLGAMLILWFAGVATCYWAEAQPNPLFHGVNQQATALQAGGNMEGKEVRFGIADSALFATVTTDASCGAVNAMHDSFMPLGGMVPLTNIMLGEIVFGGVGAGLYGMLVFVIVAVFIAGLMVGRTPEYLGNKIQAYDVQMAMLYLLIFPLIILGFSAVAVLTPHLGLPSISNPGPHGLTQILYAYSSATGNNGSAFAGLNANTSWYNLSLGFAMFIGRFLMIVPMLALAGNLAQKKNVPETLGTFPVTTPLFTVLLTSVIIVVGALTFLPALSLGPILEHLLLQAGRTF.

The next 10 helical transmembrane spans lie at 11 to 31 (IFIA…AAVF), 64 to 84 (TAYC…TYLI), 136 to 156 (GLAT…IAFI), 178 to 198 (ILWV…SQGV), 273 to 293 (MLEM…LGQM), 301 to 321 (WAVL…CYWA), 403 to 423 (AGLY…GLMV), 442 to 462 (AMLY…VAVL), 511 to 531 (LGFA…ALAG), and 552 to 572 (LFTV…FLPA).

It belongs to the KdpA family. As to quaternary structure, the system is composed of three essential subunits: KdpA, KdpB and KdpC.

Its subcellular location is the cell inner membrane. Functionally, part of the high-affinity ATP-driven potassium transport (or Kdp) system, which catalyzes the hydrolysis of ATP coupled with the electrogenic transport of potassium into the cytoplasm. This subunit binds the periplasmic potassium ions and delivers the ions to the membrane domain of KdpB through an intramembrane tunnel. In Acidobacterium capsulatum (strain ATCC 51196 / DSM 11244 / BCRC 80197 / JCM 7670 / NBRC 15755 / NCIMB 13165 / 161), this protein is Potassium-transporting ATPase potassium-binding subunit.